A 402-amino-acid polypeptide reads, in one-letter code: Bisdemethoxycurcumin synthase (402 aa).

The Acyl-thioester intermediate role is filled by C174.

The protein belongs to the thiolase-like superfamily. Chalcone/stilbene synthases family. As to quaternary structure, homodimer.

The enzyme catalyses 2 4-coumaroyl-CoA + malonyl-CoA + H2O + H(+) = bisdemethoxycurcumin + 2 CO2 + 3 CoA. It functions in the pathway secondary metabolite biosynthesis; flavonoid biosynthesis. Plant-specific type III polyketide synthase (PKS) that catalyzes the one-pot formation of the C6-C7-C6 diarylheptanoid scaffold of bisdemethoxycurcumin by the condensation of two molecules of 4-coumaroyl-CoA and one molecule of malonyl-CoA. The polypeptide is Bisdemethoxycurcumin synthase (Oryza sativa subsp. japonica (Rice)).